The chain runs to 67 residues: Small ribosomal subunit protein eS17 (67 aa).

This sequence belongs to the eukaryotic ribosomal protein eS17 family. As to quaternary structure, part of the 30S ribosomal subunit.

The protein is Small ribosomal subunit protein eS17 of Pyrococcus furiosus (strain ATCC 43587 / DSM 3638 / JCM 8422 / Vc1).